Here is a 391-residue protein sequence, read N- to C-terminus: UPF0229 protein CLL_A3091 (391 aa).

Disordered stretches follow at residues 1-23 (MAIF…DKRR) and 75-107 (VATG…GNEE). Residues 80–92 (GEEKRGDKIESGS) show a composition bias toward basic and acidic residues.

This sequence belongs to the UPF0229 family.

In Clostridium botulinum (strain Eklund 17B / Type B), this protein is UPF0229 protein CLL_A3091.